Reading from the N-terminus, the 486-residue chain is Serralysin (486 aa).

H187 serves as a coordination point for Zn(2+). Residue E188 is part of the active site. Zn(2+) is bound by residues H191 and H197. R266, D269, D298, G300, G301, D303, T340, and E342 together coordinate Ca(2+). Hemolysin-type calcium-binding repeat units follow at residues 345–362 and 363–380; these read IGGS…ANTL and KGGA…ADNL.

It belongs to the peptidase M10B family. Zn(2+) is required as a cofactor. Requires Ca(2+) as cofactor.

It is found in the secreted. The catalysed reaction is Preferential cleavage of bonds with hydrophobic residues in P1'.. The protein is Serralysin (prtA1) of Photorhabdus luminescens (Xenorhabdus luminescens).